Reading from the N-terminus, the 419-residue chain is MKRVLSNVLKAWIFTIVAFHNFSTSVTADAPVNAAEYNALCRLYNIARAGEGLKEEDWLPCAGKAACEKTAASIEDVFMKLNFSEPSAVVTTLDGTRVELQNSASTRIKRAKLAKVLAAAETIKAQQLKYHESSKSLLESAKANFTKAIVGGWGNPTTPDESGLPTTFKTNRADDCKLAGGNGGKSLVFDIACLCTTSDSASGSKYTCGPKSGDNGSGWLDNNGDNQGKPAAKEAWKNLRADCRRQSAGVRVTPELISQSLVIFEGLIGTRAASGHDNARYIFGTVATAQSCGHSTATNKGSIDYKASNAQQRGDIEWEKNLRMAEGDLRGLLTAKQLVAALQARAEHLEDAAFTIFNESVLETQIAWESSRPPSTDANTSQKGPLQRPEKSGESSHLPSGSSHGTKAIRSILHVALLM.

The signal sequence occupies residues 1-28; that stretch reads MKRVLSNVLKAWIFTIVAFHNFSTSVTA. N-linked (GlcNAc...) asparagine glycosylation is found at Asn-82 and Asn-358. A disordered region spans residues 369-405; it reads ESSRPPSTDANTSQKGPLQRPEKSGESSHLPSGSSHG. Residues 372 to 384 show a composition bias toward polar residues; the sequence is RPPSTDANTSQKG. Asn-379 carries N-linked (GlcNAc...) (high mannose) asparagine glycosylation. Low complexity predominate over residues 395 to 405; sequence SSHLPSGSSHG. Residue Ser-400 is the site of GPI-anchor amidated serine attachment. A propeptide spans 401–419 (removed in mature form); the sequence is GSSHGTKAIRSILHVALLM.

Its subcellular location is the cell membrane. In terms of biological role, VSG forms a coat on the surface of the parasite. The trypanosome evades the immune response of the host by expressing a series of antigenically distinct VSGs from an estimated 1000 VSG genes. The polypeptide is Variant surface glycoprotein YnAT 1.1 (Trypanosoma congolense).